Consider the following 763-residue polypeptide: Phosphoglycerol transferase I (763 aa).

Transmembrane regions (helical) follow at residues 1–21, 26–46, 77–97, and 108–128; these read MSEL…AWKA, WWFA…ITLF, ILPG…LGWI, and FGYS…SPAF.

Belongs to the OpgB family.

It is found in the cell inner membrane. It carries out the reaction a phosphatidylglycerol + a membrane-derived-oligosaccharide D-glucose = a 1,2-diacyl-sn-glycerol + a membrane-derived-oligosaccharide 6-(glycerophospho)-D-glucose.. It functions in the pathway glycan metabolism; osmoregulated periplasmic glucan (OPG) biosynthesis. In terms of biological role, transfers a phosphoglycerol residue from phosphatidylglycerol to the membrane-bound nascent glucan backbones. This Escherichia coli O7:K1 (strain IAI39 / ExPEC) protein is Phosphoglycerol transferase I.